A 300-amino-acid polypeptide reads, in one-letter code: Polyamine aminopropyltransferase (300 aa).

Residues 4–237 form the PABS domain; that stretch reads WHWHIEWQTP…GLWGFVYASD (234 aa). Residue Gln33 coordinates S-methyl-5'-thioadenosine. Positions 64 and 88 each coordinate spermidine. S-methyl-5'-thioadenosine-binding positions include Asp108 and 140–141; that span reads DG. The active-site Proton acceptor is the Asp158. Pro167 serves as a coordination point for S-methyl-5'-thioadenosine.

It belongs to the spermidine/spermine synthase family. As to quaternary structure, homodimer or homotetramer.

It localises to the cytoplasm. It catalyses the reaction S-adenosyl 3-(methylsulfanyl)propylamine + putrescine = S-methyl-5'-thioadenosine + spermidine + H(+). It functions in the pathway amine and polyamine biosynthesis; spermidine biosynthesis; spermidine from putrescine: step 1/1. In terms of biological role, catalyzes the irreversible transfer of a propylamine group from the amino donor S-adenosylmethioninamine (decarboxy-AdoMet) to putrescine (1,4-diaminobutane) to yield spermidine. The sequence is that of Polyamine aminopropyltransferase from Sulfurisphaera tokodaii (strain DSM 16993 / JCM 10545 / NBRC 100140 / 7) (Sulfolobus tokodaii).